The primary structure comprises 73 residues: UPF0346 protein SH1485 (73 aa).

Belongs to the UPF0346 family.

The chain is UPF0346 protein SH1485 from Staphylococcus haemolyticus (strain JCSC1435).